A 953-amino-acid chain; its full sequence is Translation initiation factor IF-2 (953 aa).

2 disordered regions span residues 52-241 and 279-363; these read KASK…QQEA and TKLK…TERK. 3 stretches are compositionally biased toward basic and acidic residues: residues 80-89, 98-111, and 140-188; these read TGSEHVEKTQ, FKAEREARAKEQAA, and QGDK…ENHK. The span at 191–207 shows a compositional bias: polar residues; sequence RFTNQKKQGRQEPQSKS. Over residues 229–241 the composition is skewed to basic and acidic residues; it reads RQSETRFRAQQEA. A compositionally biased stretch (polar residues) spans 282 to 291; it reads KSSNISAKST. Residues 300–317 show a composition bias toward basic and acidic residues; sequence ARPEKNRELTHHSQEGQK. Positions 322–338 are enriched in low complexity; the sequence is SWNSQNQVRNQKNSNWN. A compositionally biased stretch (basic residues) spans 339 to 348; the sequence is KNKKTKKGKN. A tr-type G domain is found at 454 to 623; it reads ERAPVVTIMG…LLVAEVEELK (170 aa). The tract at residues 463 to 470 is G1; sequence GHVDHGKT. A GTP-binding site is contributed by 463-470; that stretch reads GHVDHGKT. Positions 488–492 are G2; the sequence is GITQH. The G3 stretch occupies residues 509–512; sequence DTPG. GTP contacts are provided by residues 509 to 513 and 563 to 566; these read DTPGH and NKID. Positions 563–566 are G4; it reads NKID. Residues 599-601 form a G5 region; it reads SAK.

It belongs to the TRAFAC class translation factor GTPase superfamily. Classic translation factor GTPase family. IF-2 subfamily.

The protein localises to the cytoplasm. One of the essential components for the initiation of protein synthesis. Protects formylmethionyl-tRNA from spontaneous hydrolysis and promotes its binding to the 30S ribosomal subunits. Also involved in the hydrolysis of GTP during the formation of the 70S ribosomal complex. In Streptococcus pyogenes serotype M4 (strain MGAS10750), this protein is Translation initiation factor IF-2.